A 309-amino-acid chain; its full sequence is tRNA dimethylallyltransferase 1 (309 aa).

14–21 (GPTASGKS) contributes to the ATP binding site. Residue 16 to 21 (TASGKS) coordinates substrate. Residues 39–42 (DSMQ) are interaction with substrate tRNA.

This sequence belongs to the IPP transferase family. In terms of assembly, monomer. The cofactor is Mg(2+).

The catalysed reaction is adenosine(37) in tRNA + dimethylallyl diphosphate = N(6)-dimethylallyladenosine(37) in tRNA + diphosphate. Functionally, catalyzes the transfer of a dimethylallyl group onto the adenine at position 37 in tRNAs that read codons beginning with uridine, leading to the formation of N6-(dimethylallyl)adenosine (i(6)A). In Pelobacter propionicus (strain DSM 2379 / NBRC 103807 / OttBd1), this protein is tRNA dimethylallyltransferase 1.